Here is a 523-residue protein sequence, read N- to C-terminus: Asc-type amino acid transporter 1 (523 aa).

The interval 1 to 28 is disordered; the sequence is MAGHTQQPSGRGNPRPAPSPSPVPGTVP. Residues 15–25 are compositionally biased toward pro residues; that stretch reads RPAPSPSPVPG. Helical transmembrane passes span 40 to 60, 72 to 92, 113 to 133, 268 to 288, 310 to 330, 362 to 382, 388 to 408, 424 to 444, and 448 to 468; these read IGLLSACTIIIGNIIGSGIFI, VGLALFVWVLGGGVTALGSLC, IFGGLAGFLLLWSAVLIMYPT, AIFISIPLVTFVYTFTNIAYF, LLGYFSWVMPVSVALSTFGGI, CTPIPALLVCCGATAVIMLVG, INYVSFINYLCYGVTILGLLL, LLIPVAYLVFWAFLLVFSFIS, and VCGVGVIIILTGVPIFFLGVF. The segment at 499–523 is disordered; sequence APEEEENGPCPPSLLPATDKPSKPQ.

This sequence belongs to the amino acid-polyamine-organocation (APC) superfamily. In terms of assembly, disulfide-linked heterodimer with the amino acid transport protein SLC3A2/4F2hc. Expressed in brain, heart, kidney, liver, lung, pancreas, placenta, and skeletal muscle.

The protein localises to the cell membrane. The enzyme catalyses L-alanine(in) + glycine(out) = L-alanine(out) + glycine(in). The catalysed reaction is L-serine(out) + L-alanine(in) = L-serine(in) + L-alanine(out). It catalyses the reaction L-threonine(out) + L-alanine(in) = L-threonine(in) + L-alanine(out). It carries out the reaction L-cysteine(out) + L-alanine(in) = L-cysteine(in) + L-alanine(out). The enzyme catalyses 2-aminoisobutanoate(out) + L-alanine(in) = 2-aminoisobutanoate(in) + L-alanine(out). The catalysed reaction is D-serine(out) + L-alanine(in) = D-serine(in) + L-alanine(out). It catalyses the reaction D-alanine(out) + L-alanine(in) = D-alanine(in) + L-alanine(out). It carries out the reaction L-valine(out) + L-alanine(in) = L-valine(in) + L-alanine(out). The enzyme catalyses L-methionine(out) + L-alanine(in) = L-methionine(in) + L-alanine(out). The catalysed reaction is beta-alanine(out) + L-alanine(in) = beta-alanine(in) + L-alanine(out). It catalyses the reaction D-cysteine(out) + L-alanine(in) = D-cysteine(in) + L-alanine(out). It carries out the reaction D-threonine(out) + L-alanine(in) = D-threonine(in) + L-alanine(out). The enzyme catalyses D-isoleucine(out) + D-serine(in) = D-isoleucine(in) + D-serine(out). The catalysed reaction is D-serine(in) = D-serine(out). Functionally, associates with SLC3A2/4F2hc to form a functional heterodimeric complex that translocates small neutral L- and D-amino acids across the plasma membrane. Preferentially mediates exchange transport, but can also operate via facilitated diffusion. Acts as a major transporter for glycine, L- and D-serine in the central nervous system. At the spinal cord and brainstem regulates glycine metabolism and glycinergic inhibitory neurotransmission by providing for glycine de novo synthesis from L-serine and glycine recycling from astrocytes to glycinergic motor neurons. At Schaffer collateral-CA1 synapses mediates D-serine and glycine release that modulates post-synaptic activation of NMDA receptors and excitatory glutamatergic transmission. May regulate D-serine release from mesenchymal progenitors located in developing subcutaneous adipose tissue, favoring white adipocyte over thermogenic beige adipocyte lineage commitment. This chain is Asc-type amino acid transporter 1 (SLC7A10), found in Homo sapiens (Human).